We begin with the raw amino-acid sequence, 496 residues long: Probable CtpA-like serine protease (496 aa).

The segment covering 1–16 has biased composition (basic and acidic residues); the sequence is MDDKQHTSSSDDERAE. Residues 1 to 27 form a disordered region; the sequence is MDDKQHTSSSDDERAEIATSNQDQETN. Over residues 18–27 the composition is skewed to polar residues; that stretch reads ATSNQDQETN. Residues 39 to 59 form a helical membrane-spanning segment; that stretch reads FISILIGTILITAVITVVAYI. One can recognise a PDZ domain in the interval 124 to 206; the sequence is TKSFNEGVSG…TEVTLTVQRG (83 aa). Catalysis depends on charge relay system residues Ser329, Asp340, and Lys354.

The protein belongs to the peptidase S41A family.

The protein localises to the cell membrane. The chain is Probable CtpA-like serine protease from Staphylococcus aureus (strain MSSA476).